The sequence spans 156 residues: Small ribosomal subunit protein uS7 (156 aa).

Belongs to the universal ribosomal protein uS7 family. In terms of assembly, part of the 30S ribosomal subunit. Contacts proteins S9 and S11.

In terms of biological role, one of the primary rRNA binding proteins, it binds directly to 16S rRNA where it nucleates assembly of the head domain of the 30S subunit. Is located at the subunit interface close to the decoding center, probably blocks exit of the E-site tRNA. The chain is Small ribosomal subunit protein uS7 from Paracoccus denitrificans (strain Pd 1222).